The primary structure comprises 418 residues: Putative ion-transport protein YfeO (418 aa).

The next 12 membrane-spanning stretches (helical) occupy residues Leu10–Val30, Asp54–Ile74, Ala99–Pro119, Glu120–Pro140, Ile149–Ile169, Leu186–Pro206, Ile223–Cys243, Val258–Val278, Asp300–Phe320, Gly322–His342, Val343–Val363, and Leu371–Met391.

The protein belongs to the chloride channel (TC 2.A.49) family.

The protein localises to the cell membrane. The sequence is that of Putative ion-transport protein YfeO from Shigella boydii serotype 4 (strain Sb227).